A 186-amino-acid polypeptide reads, in one-letter code: Putative manganese efflux pump MntP (186 aa).

Helical transmembrane passes span 1 to 21, 41 to 61, 71 to 91, 105 to 125, 130 to 150, and 165 to 185; these read MSFLTNFLLGLGLSMDAFAVS, VFFGGFQAFMPVLGWLGGSAV, WIAFGLLTFIGGKMIYEALYG, LLMLAIATSIDALAVGISFAF, ILEPVIIIGCVTFVMSFCGAV, and IIGGLILIGIGGKILAEHLLW.

The protein belongs to the MntP (TC 9.B.29) family.

The protein resides in the cell membrane. In terms of biological role, probably functions as a manganese efflux pump. This Methanosarcina barkeri (strain Fusaro / DSM 804) protein is Putative manganese efflux pump MntP.